Reading from the N-terminus, the 326-residue chain is Putative ABC transporter ATP-binding protein MPN_334 (326 aa).

The ABC transporter domain occupies 7–239 (VEVKHLEKEF…NFGYRLKVNN (233 aa)). 42-49 (GQNGAGKT) contributes to the ATP binding site.

It belongs to the ABC transporter superfamily.

The protein is Putative ABC transporter ATP-binding protein MPN_334 of Mycoplasma pneumoniae (strain ATCC 29342 / M129 / Subtype 1) (Mycoplasmoides pneumoniae).